Consider the following 263-residue polypeptide: tRNA pseudouridine synthase A (263 aa).

Asp-54 functions as the Nucleophile in the catalytic mechanism. Tyr-113 provides a ligand contact to substrate.

Belongs to the tRNA pseudouridine synthase TruA family. As to quaternary structure, homodimer.

It catalyses the reaction uridine(38/39/40) in tRNA = pseudouridine(38/39/40) in tRNA. In terms of biological role, formation of pseudouridine at positions 38, 39 and 40 in the anticodon stem and loop of transfer RNAs. The chain is tRNA pseudouridine synthase A from Lactobacillus helveticus (strain DPC 4571).